The following is a 111-amino-acid chain: MKYLAAYLLLVQGGNTSPSASDITALLESVGVEAEESRLQALLKDLEGKDLQELIAEGNTKLASVPSGGAAAGGASASTGAAAGGAAEAEEEKEEEAKEESDDDMGFGLFD.

The interval 62 to 111 is disordered; that stretch reads LASVPSGGAAAGGASASTGAAAGGAAEAEEEKEEEAKEESDDDMGFGLFD. The span at 67–87 shows a compositional bias: low complexity; sequence SGGAAAGGASASTGAAAGGAA. Over residues 88 to 105 the composition is skewed to acidic residues; sequence EAEEEKEEEAKEESDDDM. At Ser-101 the chain carries Phosphoserine.

Belongs to the eukaryotic ribosomal protein P1/P2 family.

In terms of biological role, plays an important role in the elongation step of protein synthesis. This Candida albicans (Yeast) protein is Large ribosomal subunit protein P2B (RPP2B).